A 507-amino-acid chain; its full sequence is MAMAAAKGRVLPLLAVAAALAAALLYRAPFSKSLGGEGCSLLPHDHFWIASERVVTLGRVGPAAVEVKGGLINAIAVGDYRSFLLRRPVVDYGDAVIMPGLIDVHAHLDEPGRAEWEGFSTGTRAAAAGGITTLVDMPLNSYPSTVSEETLKLKLDAAKDKLHVDVGFWGGLVPENALNPSALESLLNAGVLGLKSFMCPSGINDFPMTNSTHIEEGLVTLAKYKRPLLIHAERIPDVQNEDGIDGELDPKAYTTYLKSRPPAWEEAAIKDLQRAMKDTEIGGRSEGAHIHIVHLSDAKTSLGLLKDAKQNGARVSVETCPHYLAFSAEEVPDGDTRFKCAPPIRDSTNRDNLWEALLDGHIDMLSSDHSPSAPDLKLMEEGNFLRAWGGISSLQFVLPVTWSHGKKYGISLNQLASWWSERPAMLAGLKKKGAVLPGYRADIVVWKPEAQFHLDDSHPVYHKHRNISAYLGKQLSGKILSTFVGGNLVFAEDKHAKAACGAPILAK.

Zn(2+) contacts are provided by histidine 105, histidine 107, lysine 195, histidine 231, histidine 294, and aspartate 368. Lysine 195 carries the post-translational modification N6-carboxylysine.

This sequence belongs to the metallo-dependent hydrolases superfamily. Allantoinase family. As to quaternary structure, homotetramer. It depends on Zn(2+) as a cofactor. Post-translationally, carboxylation allows a single lysine to coordinate two zinc ions.

It catalyses the reaction (S)-allantoin + H2O = allantoate + H(+). It participates in nitrogen metabolism; (S)-allantoin degradation; allantoate from (S)-allantoin: step 1/1. Catalyzes the conversion of allantoin (5-ureidohydantoin) to allantoate by hydrolytic cleavage of the five-member hydantoin ring. Catalyzes the first step of the ureide allantoin degradation followed by the sequential activity of AAH, UGLYAH and UAH which allows a complete purine breakdown without the intermediate generation of urea. This chain is Probable allantoinase (ALN), found in Oryza sativa subsp. japonica (Rice).